The chain runs to 350 residues: Ketol-acid reductoisomerase (NADP(+)) (350 aa).

Residues 3-183 (AQIWYEDDGD…GALRAGAIKT (181 aa)) form the KARI N-terminal Rossmann domain. Residues 26 to 29 (YGSQ), R49, S52, S54, and 84 to 87 (DQYQ) each bind NADP(+). Residue H109 is part of the active site. G135 lines the NADP(+) pocket. In terms of domain architecture, KARI C-terminal knotted spans 184–327 (TFKEETETDL…PKLRAMFSWN (144 aa)). Residues D192, E196, E228, and E232 each contribute to the Mg(2+) site. S253 is a substrate binding site.

Belongs to the ketol-acid reductoisomerase family. Requires Mg(2+) as cofactor.

It carries out the reaction (2R)-2,3-dihydroxy-3-methylbutanoate + NADP(+) = (2S)-2-acetolactate + NADPH + H(+). It catalyses the reaction (2R,3R)-2,3-dihydroxy-3-methylpentanoate + NADP(+) = (S)-2-ethyl-2-hydroxy-3-oxobutanoate + NADPH + H(+). The protein operates within amino-acid biosynthesis; L-isoleucine biosynthesis; L-isoleucine from 2-oxobutanoate: step 2/4. Its pathway is amino-acid biosynthesis; L-valine biosynthesis; L-valine from pyruvate: step 2/4. In terms of biological role, involved in the biosynthesis of branched-chain amino acids (BCAA). Catalyzes an alkyl-migration followed by a ketol-acid reduction of (S)-2-acetolactate (S2AL) to yield (R)-2,3-dihydroxy-isovalerate. In the isomerase reaction, S2AL is rearranged via a Mg-dependent methyl migration to produce 3-hydroxy-3-methyl-2-ketobutyrate (HMKB). In the reductase reaction, this 2-ketoacid undergoes a metal-dependent reduction by NADPH to yield (R)-2,3-dihydroxy-isovalerate. The chain is Ketol-acid reductoisomerase (NADP(+)) from Bifidobacterium animalis subsp. lactis (strain AD011).